The primary structure comprises 555 residues: Serine/threonine-protein kinase AGC1-7 (555 aa).

The segment at 1-126 (MLTKPGKKLD…PSKPHTGGDI (126 aa)) is disordered. Basic and acidic residues-rich tracts occupy residues 7–16 (KKLDSSESTH) and 35–54 (PRKE…DNLI). Low complexity predominate over residues 84–118 (SQSNLNTKPNNNNSNNNSNMSSRSNSIESTSSNPS). A Protein kinase domain is found at 146 to 480 (FRLLKRLGYG…ATEIKQHPFF (335 aa)). Residues 152-160 (LGYGDIGSV) and lysine 175 contribute to the ATP site. The active-site Proton acceptor is the aspartate 271. One can recognise an AGC-kinase C-terminal domain in the interval 481 to 555 (EGVNWALIRS…DPDYIDFEYF (75 aa)). A disordered region spans residues 514–547 (AAVDGGGKKNNNGAGGGCSTGGGDNKPNGDCNDP). Residues 526–537 (GAGGGCSTGGGD) are compositionally biased toward gly residues.

Belongs to the protein kinase superfamily. AGC Ser/Thr protein kinase family. Interacts with PDPK1/PDK1. Autophosphorylated and phosphorylated by PDPK1/PDK1. In terms of tissue distribution, specifically expressed in pollen grains.

It localises to the cytoplasm. It carries out the reaction L-seryl-[protein] + ATP = O-phospho-L-seryl-[protein] + ADP + H(+). It catalyses the reaction L-threonyl-[protein] + ATP = O-phospho-L-threonyl-[protein] + ADP + H(+). Its activity is regulated as follows. Activated by PDPK1/PDK1. Its function is as follows. Functions redudantly with AGC1-5 as signaling component in the pollen tube. Required for polarized growth of pollen tubes. The chain is Serine/threonine-protein kinase AGC1-7 from Arabidopsis thaliana (Mouse-ear cress).